The sequence spans 424 residues: Serine--tRNA ligase (424 aa).

Residue 231–233 (TAE) participates in L-serine binding. Residue 262-264 (RSE) coordinates ATP. E285 is an L-serine binding site. Position 349-352 (349-352 (EISS)) interacts with ATP. An L-serine-binding site is contributed by S385.

This sequence belongs to the class-II aminoacyl-tRNA synthetase family. Type-1 seryl-tRNA synthetase subfamily. In terms of assembly, homodimer. The tRNA molecule binds across the dimer.

It localises to the cytoplasm. The catalysed reaction is tRNA(Ser) + L-serine + ATP = L-seryl-tRNA(Ser) + AMP + diphosphate + H(+). It carries out the reaction tRNA(Sec) + L-serine + ATP = L-seryl-tRNA(Sec) + AMP + diphosphate + H(+). It participates in aminoacyl-tRNA biosynthesis; selenocysteinyl-tRNA(Sec) biosynthesis; L-seryl-tRNA(Sec) from L-serine and tRNA(Sec): step 1/1. Catalyzes the attachment of serine to tRNA(Ser). Is also able to aminoacylate tRNA(Sec) with serine, to form the misacylated tRNA L-seryl-tRNA(Sec), which will be further converted into selenocysteinyl-tRNA(Sec). The protein is Serine--tRNA ligase of Bacillus cereus (strain G9842).